Here is a 57-residue protein sequence, read N- to C-terminus: MTMAKSADIRPGITLACTECKERNYITTKNRRNTPDRLELKKFCPRCGKQTVHRETR.

This sequence belongs to the bacterial ribosomal protein bL33 family.

This is Large ribosomal subunit protein bL33 from Bifidobacterium longum (strain NCC 2705).